An 844-amino-acid polypeptide reads, in one-letter code: Beta-mannosidase B (844 aa).

Residue Glu432 is the Proton donor of the active site. The N-linked (GlcNAc...) asparagine glycan is linked to Asn723.

It belongs to the glycosyl hydrolase 2 family. Beta-mannosidase B subfamily.

The catalysed reaction is Hydrolysis of terminal, non-reducing beta-D-mannose residues in beta-D-mannosides.. It functions in the pathway glycan metabolism; N-glycan degradation. Functionally, exoglycosidase that cleaves the single beta-linked mannose residue from the non-reducing end of beta-mannosidic oligosaccharides of various complexity and length. Prefers mannobiose over mannotriose and has no activity against polymeric mannan. Is also severely restricted by galactosyl substitutions at the +1 subsite. In Aspergillus niger (strain ATCC MYA-4892 / CBS 513.88 / FGSC A1513), this protein is Beta-mannosidase B (mndB).